Consider the following 256-residue polypeptide: Pimeloyl-[acyl-carrier protein] methyl ester esterase (256 aa).

The AB hydrolase-1 domain occupies 15 to 242; that stretch reads HLVLLHGWGL…AAHAPFISHP (228 aa). Residues W22, 82-83, and 143-147 contribute to the substrate site; these read SL and FLALQ. The active-site Nucleophile is the S82. Catalysis depends on residues D207 and H235. A substrate-binding site is contributed by H235.

The protein belongs to the AB hydrolase superfamily. Carboxylesterase BioH family. In terms of assembly, monomer.

It is found in the cytoplasm. It carries out the reaction 6-carboxyhexanoyl-[ACP] methyl ester + H2O = 6-carboxyhexanoyl-[ACP] + methanol + H(+). It participates in cofactor biosynthesis; biotin biosynthesis. The physiological role of BioH is to remove the methyl group introduced by BioC when the pimeloyl moiety is complete. It allows to synthesize pimeloyl-ACP via the fatty acid synthetic pathway through the hydrolysis of the ester bonds of pimeloyl-ACP esters. In Salmonella agona (strain SL483), this protein is Pimeloyl-[acyl-carrier protein] methyl ester esterase.